The primary structure comprises 227 residues: Cytochrome c oxidase subunit 2 (227 aa).

The Mitochondrial intermembrane portion of the chain corresponds to 1-14; it reads MAYPFQLGFQDATS. A helical membrane pass occupies residues 15-45; sequence PIMEELLHFHDHTLMIVFLISSLVLYIISLM. Over 46 to 59 the chain is Mitochondrial matrix; it reads LTTKLTHTSTMDAQ. A helical membrane pass occupies residues 60–87; that stretch reads EVETIWTILPAIILILIALPSLRILYMM. Residues 88 to 227 are Mitochondrial intermembrane-facing; the sequence is DEINNPSLTV…HFEKWSASML (140 aa). Cu cation is bound by residues histidine 161, cysteine 196, glutamate 198, cysteine 200, histidine 204, and methionine 207. Glutamate 198 provides a ligand contact to Mg(2+).

Belongs to the cytochrome c oxidase subunit 2 family. In terms of assembly, component of the cytochrome c oxidase (complex IV, CIV), a multisubunit enzyme composed of 14 subunits. The complex is composed of a catalytic core of 3 subunits MT-CO1, MT-CO2 and MT-CO3, encoded in the mitochondrial DNA, and 11 supernumerary subunits COX4I, COX5A, COX5B, COX6A, COX6B, COX6C, COX7A, COX7B, COX7C, COX8 and NDUFA4, which are encoded in the nuclear genome. The complex exists as a monomer or a dimer and forms supercomplexes (SCs) in the inner mitochondrial membrane with NADH-ubiquinone oxidoreductase (complex I, CI) and ubiquinol-cytochrome c oxidoreductase (cytochrome b-c1 complex, complex III, CIII), resulting in different assemblies (supercomplex SCI(1)III(2)IV(1) and megacomplex MCI(2)III(2)IV(2)). Found in a complex with TMEM177, COA6, COX18, COX20, SCO1 and SCO2. Interacts with TMEM177 in a COX20-dependent manner. Interacts with COX20. Interacts with COX16. Requires Cu cation as cofactor.

The protein localises to the mitochondrion inner membrane. The catalysed reaction is 4 Fe(II)-[cytochrome c] + O2 + 8 H(+)(in) = 4 Fe(III)-[cytochrome c] + 2 H2O + 4 H(+)(out). In terms of biological role, component of the cytochrome c oxidase, the last enzyme in the mitochondrial electron transport chain which drives oxidative phosphorylation. The respiratory chain contains 3 multisubunit complexes succinate dehydrogenase (complex II, CII), ubiquinol-cytochrome c oxidoreductase (cytochrome b-c1 complex, complex III, CIII) and cytochrome c oxidase (complex IV, CIV), that cooperate to transfer electrons derived from NADH and succinate to molecular oxygen, creating an electrochemical gradient over the inner membrane that drives transmembrane transport and the ATP synthase. Cytochrome c oxidase is the component of the respiratory chain that catalyzes the reduction of oxygen to water. Electrons originating from reduced cytochrome c in the intermembrane space (IMS) are transferred via the dinuclear copper A center (CU(A)) of subunit 2 and heme A of subunit 1 to the active site in subunit 1, a binuclear center (BNC) formed by heme A3 and copper B (CU(B)). The BNC reduces molecular oxygen to 2 water molecules using 4 electrons from cytochrome c in the IMS and 4 protons from the mitochondrial matrix. The protein is Cytochrome c oxidase subunit 2 (MT-CO2) of Ceratotherium simum (White rhinoceros).